Reading from the N-terminus, the 192-residue chain is MTEQTIDNILPASKNNVKQWYVVHTASGAEKRIKEDILRKIAKQKMTDFFEDILIPVFGVSEVKRGKNVKVEKKLMPSYILIKMNMTDKSWHLVKNISGVTGFLGSKIVPKALTESEIQNIFNNLEAEAKVAKNSKLYEVGEVVTVTDGPFETFMGTVEEIDKERNRLKVSVSIFGKATPIELNFNQVKKND.

Residues 140 to 168 (VGEVVTVTDGPFETFMGTVEEIDKERNRL) form the KOW domain.

Belongs to the NusG family.

Functionally, participates in transcription elongation, termination and antitermination. The chain is Transcription termination/antitermination protein NusG from Rickettsia typhi (strain ATCC VR-144 / Wilmington).